The primary structure comprises 440 residues: MKPIIAIVGRPNVGKSTLFNNLVGDKIAIVDDLPGVTRDRLYRDTEWSGSEFVIVDTGGLEPRNNDFLMAKIKEQAEVAMNEADVILFVVDGKSGLNPLDEEIAYILRKKNKPVILCVNKIDNFFEQQDDVYDFYGLGFEYLVPISGEHKVNLGDMLDIVVDIIGKMDFPEEDEEVLKLAVIGKPNAGKSSLVNKLSGEERTIVSDIAGTTRDAIDTLIEYKDNKYMIIDTAGIRRKSKVEESLEYYSVLRALKAIKRADVCILMLDAKEGLTEQDKRIAGIAAEELKPIIIVMNKWDLVENKNNATMKKIKEELYAELPFLSYAPIEFVSALTGQRTTNLLEIADRIYEEYTKRISTGLLNTILKDAVLMNNPPTRKGRVIKINYATQVSVAPPKFVLFCNYPELIHFSYARYIENKFREAFGFDGSPIMISFENKSSD.

EngA-type G domains follow at residues 3 to 168 (PIIA…GKMD) and 177 to 353 (LKLA…EEYT). GTP-binding positions include 9–16 (GRPNVGKS), 56–60 (DTGGL), 119–122 (NKID), 183–190 (GKPNAGKS), 230–234 (DTAGI), and 295–298 (NKWD). Residues 354-438 (KRISTGLLNT…PIMISFENKS (85 aa)) form the KH-like domain.

Belongs to the TRAFAC class TrmE-Era-EngA-EngB-Septin-like GTPase superfamily. EngA (Der) GTPase family. Associates with the 50S ribosomal subunit.

Its function is as follows. GTPase that plays an essential role in the late steps of ribosome biogenesis. This Fusobacterium nucleatum subsp. nucleatum (strain ATCC 25586 / DSM 15643 / BCRC 10681 / CIP 101130 / JCM 8532 / KCTC 2640 / LMG 13131 / VPI 4355) protein is GTPase Der.